The following is an 852-amino-acid chain: Probable nitrite reductase-hydroxylamine oxidoreductase fusion protein (852 aa).

Residues 1-27 (MLNKSAALVPVVLAFLFLFLCFQCLYA) form the signal peptide. A nitrite reductase domain region spans residues 28 to 327 (DIRCLTGKDG…DEGRKTLSAP (300 aa)). Plastocyanin-like domains lie at 72-169 (VPGP…IVEP) and 217-307 (GETW…VEEG). Residues His102 and His145 each coordinate Cu cation. Residues 328–827 (GQDRQPPTLE…ISWWWGTAQG (500 aa)) are hydroxylamine oxidoreductase domain. Cys406, Cys409, His410, His426, Cys463, Cys466, His467, His471, Cys483, Cys486, His487, His505, His537, Cys543, Cys546, His547, His550, Cys563, Cys566, His567, Cys614, Cys617, His618, Cys686, Cys689, His690, and His813 together coordinate heme.

In the N-terminal section; belongs to the multicopper oxidase family. It depends on Cu cation as a cofactor. Heme is required as a cofactor.

Its subcellular location is the encapsulin nanocompartment. It carries out the reaction hydroxylamine + 4 Fe(III)-[cytochrome c] + H2O = 4 Fe(II)-[cytochrome c] + nitrite + 5 H(+). The enzyme catalyses nitric oxide + Fe(III)-[cytochrome c] + H2O = Fe(II)-[cytochrome c] + nitrite + 2 H(+). In terms of biological role, a nitrite reductase-hydroxylamine oxidoreductase protein that probably functions in the type 1 encapsulin nanocompartment. Probably involved in reductive catalysis. Targeted to the encapsulin nanocompartment by association with the diheme domain of the encapsulin shell protein (AC Q1Q6L7). Catalyzes the reduction of nitrite to nitric oxide (NO). Catalyzes the oxidation of hydroxylamine to nitrite. The sequence is that of Probable nitrite reductase-hydroxylamine oxidoreductase fusion protein from Kuenenia stuttgartiensis.